Reading from the N-terminus, the 201-residue chain is 3-isopropylmalate dehydratase small subunit (201 aa).

The protein belongs to the LeuD family. LeuD type 1 subfamily. Heterodimer of LeuC and LeuD.

It carries out the reaction (2R,3S)-3-isopropylmalate = (2S)-2-isopropylmalate. It functions in the pathway amino-acid biosynthesis; L-leucine biosynthesis; L-leucine from 3-methyl-2-oxobutanoate: step 2/4. In terms of biological role, catalyzes the isomerization between 2-isopropylmalate and 3-isopropylmalate, via the formation of 2-isopropylmaleate. In Brucella anthropi (strain ATCC 49188 / DSM 6882 / CCUG 24695 / JCM 21032 / LMG 3331 / NBRC 15819 / NCTC 12168 / Alc 37) (Ochrobactrum anthropi), this protein is 3-isopropylmalate dehydratase small subunit.